Reading from the N-terminus, the 215-residue chain is uncharacterized protein (215 aa).

A run of 5 helical transmembrane segments spans residues 1–21 (MTAE…AIGM), 36–56 (VLIG…FADV), 67–87 (SRIA…NILV), 92–112 (IVGL…MVIG), and 118–138 (LGIY…QLTF).

Belongs to the MgtC/SapB family.

Its subcellular location is the cell inner membrane. This is an uncharacterized protein from Escherichia coli O157:H7.